The primary structure comprises 339 residues: Tetraacyldisaccharide 4'-kinase (339 aa).

44–51 (TVGGTGKT) provides a ligand contact to ATP.

It belongs to the LpxK family.

The enzyme catalyses a lipid A disaccharide + ATP = a lipid IVA + ADP + H(+). It functions in the pathway glycolipid biosynthesis; lipid IV(A) biosynthesis; lipid IV(A) from (3R)-3-hydroxytetradecanoyl-[acyl-carrier-protein] and UDP-N-acetyl-alpha-D-glucosamine: step 6/6. Its function is as follows. Transfers the gamma-phosphate of ATP to the 4'-position of a tetraacyldisaccharide 1-phosphate intermediate (termed DS-1-P) to form tetraacyldisaccharide 1,4'-bis-phosphate (lipid IVA). This chain is Tetraacyldisaccharide 4'-kinase, found in Bdellovibrio bacteriovorus (strain ATCC 15356 / DSM 50701 / NCIMB 9529 / HD100).